We begin with the raw amino-acid sequence, 398 residues long: Meiotically up-regulated gene 126 protein (398 aa).

2 disordered regions span residues 30 to 81 and 119 to 260; these read EEME…QRHR and FESD…NSNS. 2 stretches are compositionally biased toward polar residues: residues 119–135 and 183–199; these read FESD…NFPT and VQEN…QEPQ. A compositionally biased stretch (low complexity) spans 210-222; that stretch reads QANQQETSSNQEE. The span at 224–236 shows a compositional bias: basic and acidic residues; sequence SFDRQETQDDKQK. A compositionally biased stretch (polar residues) spans 248-260; it reads RNRNQATITNSNS. A run of 4 helical transmembrane segments spans residues 269–289, 305–325, 341–361, and 373–393; these read IFVI…DLIE, IFLW…YLAL, GACF…CFLI, and LEIY…GAIY.

It is found in the membrane. Functionally, has a role in meiosis. The sequence is that of Meiotically up-regulated gene 126 protein (mug126) from Schizosaccharomyces pombe (strain 972 / ATCC 24843) (Fission yeast).